The chain runs to 468 residues: 3-isopropylmalate dehydratase large subunit (468 aa).

The tract at residues Gln-53–Gly-74 is disordered. [4Fe-4S] cluster contacts are provided by Cys-347, Cys-407, and Cys-410.

It belongs to the aconitase/IPM isomerase family. LeuC type 1 subfamily. Heterodimer of LeuC and LeuD. [4Fe-4S] cluster serves as cofactor.

It catalyses the reaction (2R,3S)-3-isopropylmalate = (2S)-2-isopropylmalate. The protein operates within amino-acid biosynthesis; L-leucine biosynthesis; L-leucine from 3-methyl-2-oxobutanoate: step 2/4. Its function is as follows. Catalyzes the isomerization between 2-isopropylmalate and 3-isopropylmalate, via the formation of 2-isopropylmaleate. The polypeptide is 3-isopropylmalate dehydratase large subunit (Pasteurella multocida (strain Pm70)).